Consider the following 538-residue polypeptide: indole-2-monooxygenase (538 aa).

The chain crosses the membrane as a helical span at residues 22 to 42; sequence ALLLAIPFSLLLLPLLLRYLA. Cys481 serves as a coordination point for heme.

Belongs to the cytochrome P450 family. Requires heme as cofactor.

It localises to the membrane. It carries out the reaction indole + reduced [NADPH--hemoprotein reductase] + O2 = indolin-2-one + oxidized [NADPH--hemoprotein reductase] + H2O + H(+). It participates in secondary metabolite biosynthesis; 2,4-dihydroxy-1,4-benzoxazin-3-one biosynthesis; 2,4-dihydroxy-1,4-benzoxazin-3-one from indoleglycerol phosphate: step 2/5. Its function is as follows. Catalyzes the conversion of indole to indolin-2-one. The sequence is that of indole-2-monooxygenase (CYP71C4) from Zea mays (Maize).